Consider the following 406-residue polypeptide: Imidazolonepropionase (406 aa).

Fe(3+)-binding residues include histidine 67 and histidine 69. 2 residues coordinate Zn(2+): histidine 67 and histidine 69. 4-imidazolone-5-propanoate-binding residues include arginine 76, tyrosine 139, and histidine 172. Tyrosine 139 provides a ligand contact to N-formimidoyl-L-glutamate. Residue histidine 237 participates in Fe(3+) binding. Residue histidine 237 coordinates Zn(2+). Position 240 (glutamine 240) interacts with 4-imidazolone-5-propanoate. Aspartate 312 provides a ligand contact to Fe(3+). Aspartate 312 is a Zn(2+) binding site. The N-formimidoyl-L-glutamate site is built by asparagine 314 and glycine 316. Residue threonine 317 participates in 4-imidazolone-5-propanoate binding.

Belongs to the metallo-dependent hydrolases superfamily. HutI family. Zn(2+) serves as cofactor. Requires Fe(3+) as cofactor.

It localises to the cytoplasm. It catalyses the reaction 4-imidazolone-5-propanoate + H2O = N-formimidoyl-L-glutamate. The protein operates within amino-acid degradation; L-histidine degradation into L-glutamate; N-formimidoyl-L-glutamate from L-histidine: step 3/3. Its function is as follows. Catalyzes the hydrolytic cleavage of the carbon-nitrogen bond in imidazolone-5-propanoate to yield N-formimidoyl-L-glutamate. It is the third step in the universal histidine degradation pathway. The chain is Imidazolonepropionase from Paraburkholderia phymatum (strain DSM 17167 / CIP 108236 / LMG 21445 / STM815) (Burkholderia phymatum).